A 360-amino-acid polypeptide reads, in one-letter code: Glutamate 5-kinase (360 aa).

Position 7 (Lys7) interacts with ATP. Substrate contacts are provided by Ser47, Asp134, and Asn146. Residues 166-167 (TD) and 210-216 (TGGITTK) each bind ATP. Positions 275-348 (VGQITLDEGA…LNKKENINSS (74 aa)) constitute a PUA domain.

The protein belongs to the glutamate 5-kinase family.

The protein localises to the cytoplasm. It catalyses the reaction L-glutamate + ATP = L-glutamyl 5-phosphate + ADP. It functions in the pathway amino-acid biosynthesis; L-proline biosynthesis; L-glutamate 5-semialdehyde from L-glutamate: step 1/2. Its function is as follows. Catalyzes the transfer of a phosphate group to glutamate to form L-glutamate 5-phosphate. The polypeptide is Glutamate 5-kinase (Prochlorococcus marinus subsp. pastoris (strain CCMP1986 / NIES-2087 / MED4)).